The chain runs to 612 residues: Protein brambleberry (612 aa).

A signal peptide spans 1–20 (MALWFVLLWVSSLQYAEVEA). A run of 2 helical transmembrane segments spans residues 364 to 384 (LWTC…LSFL) and 417 to 437 (LTLL…LLWA). 2 disordered regions span residues 452-476 (LSIY…PASS) and 555-574 (NRSR…SFSG). Residues 457 to 470 (PKEKTPEKQHEFGE) show a composition bias toward basic and acidic residues. Low complexity predominate over residues 556-574 (RSRSSSPNQSLASSSSFSG).

Its subcellular location is the nucleus membrane. In terms of biological role, required for nuclear membrane fusion during karyogamy. The sequence is that of Protein brambleberry (bmb) from Danio rerio (Zebrafish).